A 197-amino-acid chain; its full sequence is Recombination protein RecR (197 aa).

A C4-type zinc finger spans residues C57–C72. Residues G79–P174 enclose the Toprim domain.

The protein belongs to the RecR family.

In terms of biological role, may play a role in DNA repair. It seems to be involved in an RecBC-independent recombinational process of DNA repair. It may act with RecF and RecO. This is Recombination protein RecR from Citrifermentans bemidjiense (strain ATCC BAA-1014 / DSM 16622 / JCM 12645 / Bem) (Geobacter bemidjiensis).